The chain runs to 499 residues: Glycerol kinase (499 aa).

Position 11 (threonine 11) interacts with ADP. The ATP site is built by threonine 11, serine 12, and serine 13. Threonine 11 provides a ligand contact to sn-glycerol 3-phosphate. Arginine 15 serves as a coordination point for ADP. Residues arginine 81, glutamate 82, tyrosine 133, and aspartate 242 each contribute to the sn-glycerol 3-phosphate site. Glycerol-binding residues include arginine 81, glutamate 82, tyrosine 133, aspartate 242, and glutamine 243. Residues threonine 264 and glycine 309 each contribute to the ADP site. Threonine 264, glycine 309, glutamine 313, and glycine 414 together coordinate ATP. 2 residues coordinate ADP: glycine 414 and asparagine 418.

Belongs to the FGGY kinase family.

The catalysed reaction is glycerol + ATP = sn-glycerol 3-phosphate + ADP + H(+). It participates in polyol metabolism; glycerol degradation via glycerol kinase pathway; sn-glycerol 3-phosphate from glycerol: step 1/1. Its activity is regulated as follows. Inhibited by fructose 1,6-bisphosphate (FBP). Key enzyme in the regulation of glycerol uptake and metabolism. Catalyzes the phosphorylation of glycerol to yield sn-glycerol 3-phosphate. The chain is Glycerol kinase from Methylibium petroleiphilum (strain ATCC BAA-1232 / LMG 22953 / PM1).